We begin with the raw amino-acid sequence, 518 residues long: Glucose-6-phosphate 1-dehydrogenase (518 aa).

NADP(+) is bound by residues G36–K43, R70, and K169. D-glucose 6-phosphate contacts are provided by residues K169, H199–K203, E237, and D256. H261 (proton acceptor) is an active-site residue. R356 contributes to the NADP(+) binding site. Positions 359 and 364 each coordinate D-glucose 6-phosphate. Residues K365, R369, and R392 each coordinate NADP(+). Q394 is a D-glucose 6-phosphate binding site. NADP(+)-binding positions include Y400–K402, D420–T422, R486, Y502, and W508.

This sequence belongs to the glucose-6-phosphate dehydrogenase family.

Its subcellular location is the cytoplasm. It localises to the cytosol. The enzyme catalyses D-glucose 6-phosphate + NADP(+) = 6-phospho-D-glucono-1,5-lactone + NADPH + H(+). It functions in the pathway carbohydrate degradation; pentose phosphate pathway; D-ribulose 5-phosphate from D-glucose 6-phosphate (oxidative stage): step 1/3. Cytosolic glucose-6-phosphate dehydrogenase that catalyzes the first and rate-limiting step of the oxidative branch within the pentose phosphate pathway/shunt, an alternative route to glycolysis for the dissimilation of carbohydrates and a major source of reducing power and metabolic intermediates for fatty acid and nucleic acid biosynthetic processes. The sequence is that of Glucose-6-phosphate 1-dehydrogenase (Zw) from Drosophila yakuba (Fruit fly).